A 402-amino-acid chain; its full sequence is Probable tRNA pseudouridine synthase D (402 aa).

Asp94 (nucleophile) is an active-site residue. The 190-residue stretch at Tyr175–Lys364 folds into the TRUD domain.

The protein belongs to the pseudouridine synthase TruD family.

The catalysed reaction is uridine(13) in tRNA = pseudouridine(13) in tRNA. Could be responsible for synthesis of pseudouridine from uracil-13 in transfer RNAs. The chain is Probable tRNA pseudouridine synthase D from Methanococcus aeolicus (strain ATCC BAA-1280 / DSM 17508 / OCM 812 / Nankai-3).